The following is a 463-amino-acid chain: Glutathione amide reductase (463 aa).

Thr-2, Gln-3, and His-4 together coordinate Ni(2+). FAD is bound by residues 14-15 (SG), Glu-34, and Thr-41. Cys-42 and Cys-47 are joined by a disulfide. Residues Lys-50 and 113 to 114 (HA) each bind FAD. Residue Lys-50 participates in NAD(+) binding. Residues 174–180 (AGYIGIE), 197–198 (LE), Val-230, and Gly-261 contribute to the NAD(+) site. FAD contacts are provided by residues Asp-302 and 308–310 (QLT). NAD(+) contacts are provided by Gln-308 and Val-341. His-437 is an FAD binding site. The active-site Proton acceptor is the His-437.

Belongs to the class-I pyridine nucleotide-disulfide oxidoreductase family. As to quaternary structure, homodimer. FAD is required as a cofactor.

It carries out the reaction 2 glutathione amide + NAD(+) = glutathione amide disulfide + NADH + H(+). Functionally, catalyzes the reduction of glutathione amide disulfide (GASSAG) to restore glutathione amide (GASH) in the presence of NADH. May play a role in GASH metabolism under anaerobic conditions as a sulfide carrier necessary for cytoplasmic sulfide oxidation. This chain is Glutathione amide reductase, found in Marichromatium gracile (Chromatium gracile).